Here is a 396-residue protein sequence, read N- to C-terminus: Pectinesterase (396 aa).

A signal peptide spans 1–21 (MQSKTLYLKATALLGGCTVFA). Thr-174 is a substrate binding site. Asp-232 serves as the catalytic Proton donor. Asp-259 serves as the catalytic Nucleophile. 2 residues coordinate substrate: Arg-324 and Trp-326.

This sequence belongs to the pectinesterase family.

It localises to the secreted. The catalysed reaction is [(1-&gt;4)-alpha-D-galacturonosyl methyl ester](n) + n H2O = [(1-&gt;4)-alpha-D-galacturonosyl](n) + n methanol + n H(+). Its pathway is glycan metabolism; pectin degradation; 2-dehydro-3-deoxy-D-gluconate from pectin: step 1/5. Functionally, involved in maceration and soft-rotting of plant tissue. The protein is Pectinesterase (pme) of Ralstonia nicotianae (strain ATCC BAA-1114 / GMI1000) (Ralstonia solanacearum).